The following is an 84-amino-acid chain: Small ribosomal subunit protein uS17 (84 aa).

The protein belongs to the universal ribosomal protein uS17 family. In terms of assembly, part of the 30S ribosomal subunit.

Its function is as follows. One of the primary rRNA binding proteins, it binds specifically to the 5'-end of 16S ribosomal RNA. The sequence is that of Small ribosomal subunit protein uS17 from Borrelia hermsii (strain HS1 / DAH).